Here is a 428-residue protein sequence, read N- to C-terminus: Cholecystokinin receptor type A (428 aa).

At 1–41 (MDVVDSLLVNGSNITPPCELGLENETLFCLDQPRPSKEWQP) the chain is on the extracellular side. N-linked (GlcNAc...) asparagine glycosylation is found at N10 and N24. Cysteines 18 and 29 form a disulfide. Residues 42-67 (AVQILLYSLIFLLSVLGNTLVITVLI) traverse the membrane as a helical segment. The Cytoplasmic segment spans residues 68-77 (RNKRMRTVTN). Residues 78–104 (IFLLSLAVSDLMLCLFCMPFNLIPNLL) form a helical membrane-spanning segment. Topologically, residues 105-115 (KDFIFGSAVCK) are extracellular. The cysteines at positions 114 and 196 are disulfide-linked. A helical membrane pass occupies residues 116-137 (TTTYFMGTSVSVSTFNLVAISL). Residues 138–157 (ERYGAICKPLQSRVWQTKSH) lie on the Cytoplasmic side of the membrane. Residues 158 to 178 (ALKVIAATWCLSFTIMTPYPI) traverse the membrane as a helical segment. The Extracellular portion of the chain corresponds to 179–210 (YSNLVPFTKNNNQTANMCRFLLPNDVMQQSWH). N-linked (GlcNAc...) asparagine glycosylation occurs at N190. The helical transmembrane segment at 211–234 (TFLLLILFLIPGIVMMVAYGLISL) threads the bilayer. Topologically, residues 235 to 313 (ELYQGIKFEA…NLMAKKRVIR (79 aa)) are cytoplasmic. A disordered region spans residues 248–272 (KSAKERKPSTTSSGKYEDSDGCYLQ). Residues 314–334 (MLIVIVVLFFLCWMPIFSANA) traverse the membrane as a helical segment. At 335–349 (WRAYDTASAERRLSG) the chain is on the extracellular side. A helical transmembrane segment spans residues 350 to 373 (TPISFILLLSYTSSCVNPIIYCFM). Residues 374–428 (NKRFRLGFMATFPCCPNPGPPGARGEVGEEEEGGTTGASLSRFSYSHMSASVPPQ) lie on the Cytoplasmic side of the membrane. C387 is lipidated: S-palmitoyl cysteine. A disordered region spans residues 394-428 (PGARGEVGEEEEGGTTGASLSRFSYSHMSASVPPQ). Polar residues predominate over residues 411–422 (ASLSRFSYSHMS).

The protein belongs to the G-protein coupled receptor 1 family.

It localises to the cell membrane. In terms of biological role, receptor for cholecystokinin. Mediates pancreatic growth and enzyme secretion, smooth muscle contraction of the gall bladder and stomach. Has a 1000-fold higher affinity for CCK rather than for gastrin. It modulates feeding and dopamine-induced behavior in the central and peripheral nervous system. This receptor mediates its action by association with G proteins that activate a phosphatidylinositol-calcium second messenger system. This is Cholecystokinin receptor type A (CCKAR) from Homo sapiens (Human).